The sequence spans 124 residues: Kinocilin (124 aa).

2 consecutive transmembrane segments (helical) span residues 13–33 (LQLA…GVSV) and 40–60 (VGGI…YPFL). Positions 80 to 124 (PNSGPDHGEGRSSNNSNKEGARSGLSTVTRTLEKLKPGGRGTEEG) are disordered. Residues 90-109 (RSSNNSNKEGARSGLSTVTR) show a composition bias toward polar residues. Positions 110–124 (TLEKLKPGGRGTEEG) are enriched in basic and acidic residues.

As to expression, preferentially expressed in the inner ear and testis. Localizes mainly in the kinocilium of sensory cells in the inner ear. Also present in the manchette of the spermatids, a transient structure enriched in interconnected microtubules (at protein level).

It is found in the membrane. May play a role in stabilizing dense microtubular networks or in vesicular trafficking. This chain is Kinocilin (Kncn), found in Mus musculus (Mouse).